A 338-amino-acid chain; its full sequence is Terpene synthase 1 (338 aa).

The DDxx(x)D/E motif signature appears at 80–85 (DDALDS). The NDxxSxxxD/E motif motif lies at 220–228 (NDLVSYEKE).

It belongs to the terpene synthase family.

The enzyme catalyses (2E,6E)-farnesyl diphosphate = (2S,3R,6S,9S)-(-)-protoillud-7-ene + diphosphate. Terpene synthase that converts its substrate farnesyl diphosphate (FPP) into the sesquiterpene protoillud-7-ene. The protein is Terpene synthase 1 of Cavenderia fasciculata (Slime mold).